The sequence spans 236 residues: Biosynthetic peptidoglycan transglycosylase (236 aa).

The chain crosses the membrane as a helical span at residues 12 to 31 (ALLWFAAGSVLVVLVLRWVP).

Belongs to the glycosyltransferase 51 family.

The protein resides in the cell inner membrane. The catalysed reaction is [GlcNAc-(1-&gt;4)-Mur2Ac(oyl-L-Ala-gamma-D-Glu-L-Lys-D-Ala-D-Ala)](n)-di-trans,octa-cis-undecaprenyl diphosphate + beta-D-GlcNAc-(1-&gt;4)-Mur2Ac(oyl-L-Ala-gamma-D-Glu-L-Lys-D-Ala-D-Ala)-di-trans,octa-cis-undecaprenyl diphosphate = [GlcNAc-(1-&gt;4)-Mur2Ac(oyl-L-Ala-gamma-D-Glu-L-Lys-D-Ala-D-Ala)](n+1)-di-trans,octa-cis-undecaprenyl diphosphate + di-trans,octa-cis-undecaprenyl diphosphate + H(+). The protein operates within cell wall biogenesis; peptidoglycan biosynthesis. Peptidoglycan polymerase that catalyzes glycan chain elongation from lipid-linked precursors. This Pseudomonas syringae pv. syringae (strain B728a) protein is Biosynthetic peptidoglycan transglycosylase.